The following is a 371-amino-acid chain: Putative glutamate--cysteine ligase 2 (371 aa).

The protein belongs to the glutamate--cysteine ligase type 2 family. YbdK subfamily. Homodimer.

The catalysed reaction is L-cysteine + L-glutamate + ATP = gamma-L-glutamyl-L-cysteine + ADP + phosphate + H(+). In terms of biological role, ATP-dependent carboxylate-amine ligase which exhibits weak glutamate--cysteine ligase activity. The sequence is that of Putative glutamate--cysteine ligase 2 from Klebsiella pneumoniae (strain 342).